Reading from the N-terminus, the 491-residue chain is Peptidoglycan D,D-transpeptidase PbpA (491 aa).

Over 1–7 (MNASLRR) the chain is Cytoplasmic. The chain crosses the membrane as a helical; Signal-anchor for type II membrane protein span at residues 8–28 (ISVTVMALIVLLLLNATMTQV). Over 29–491 (FTADGLRADP…VIEAALQGEP (463 aa)) the chain is Periplasmic. Positions 160-484 (GAVVALEPST…AAPIGRAVIE (325 aa)) are transpeptidase. Ser-222 serves as the catalytic Acyl-ester intermediate.

This sequence belongs to the transpeptidase family.

Its subcellular location is the cell inner membrane. The enzyme catalyses Preferential cleavage: (Ac)2-L-Lys-D-Ala-|-D-Ala. Also transpeptidation of peptidyl-alanyl moieties that are N-acyl substituents of D-alanine.. Its pathway is cell wall biogenesis; peptidoglycan biosynthesis. Transpeptidase that catalyzes cross-linking of the peptidoglycan cell wall. Required for the regulation of cell length. The sequence is that of Peptidoglycan D,D-transpeptidase PbpA (pbpA) from Mycobacterium tuberculosis (strain CDC 1551 / Oshkosh).